The following is a 331-amino-acid chain: Rho GTPase-activating protein 5 (331 aa).

The region spanning 3 to 16 (IGGPTNIRHVAHVT) is the CRIB domain. One can recognise a Rho-GAP domain in the interval 48–225 (VSTESMQLSY…LLKSLTEKTV (178 aa)). Residues 227–251 (EREASSSVVDRRCSKEAEDGEKEKD) are compositionally biased toward basic and acidic residues. The disordered stretch occupies residues 227-331 (EREASSSVVD…VQPPICSSNP (105 aa)). The span at 252–277 (NEEEEEDEEEEEEEEDEDEDEEEEGD) shows a compositional bias: acidic residues.

In terms of tissue distribution, expressed in differentiating xylem cells.

It is found in the cell membrane. Acts as a GTPase activator for the Rac-type GTPase by converting it to an inactive GDP-bound state. The protein is Rho GTPase-activating protein 5 (ROPGAP5) of Arabidopsis thaliana (Mouse-ear cress).